We begin with the raw amino-acid sequence, 96 residues long: Co-chaperonin GroES (96 aa).

It belongs to the GroES chaperonin family. As to quaternary structure, heptamer of 7 subunits arranged in a ring. Interacts with the chaperonin GroEL.

Its subcellular location is the cytoplasm. Together with the chaperonin GroEL, plays an essential role in assisting protein folding. The GroEL-GroES system forms a nano-cage that allows encapsulation of the non-native substrate proteins and provides a physical environment optimized to promote and accelerate protein folding. GroES binds to the apical surface of the GroEL ring, thereby capping the opening of the GroEL channel. The chain is Co-chaperonin GroES from Neisseria gonorrhoeae (strain ATCC 700825 / FA 1090).